Reading from the N-terminus, the 91-residue chain is Small ribosomal subunit protein bS20 (91 aa).

Residues 1–28 (MPNIKSAIKRTKTIEKRRAHRASQKSDL) form a disordered region. The span at 7–23 (AIKRTKTIEKRRAHRAS) shows a compositional bias: basic residues.

Belongs to the bacterial ribosomal protein bS20 family.

Functionally, binds directly to 16S ribosomal RNA. The protein is Small ribosomal subunit protein bS20 of Brevibacillus brevis (strain 47 / JCM 6285 / NBRC 100599).